A 293-amino-acid chain; its full sequence is Acetylglutamate kinase (293 aa).

Substrate is bound by residues 68-69 (GG), arginine 90, and asparagine 189.

Belongs to the acetylglutamate kinase family. ArgB subfamily.

The protein resides in the cytoplasm. The catalysed reaction is N-acetyl-L-glutamate + ATP = N-acetyl-L-glutamyl 5-phosphate + ADP. It functions in the pathway amino-acid biosynthesis; L-arginine biosynthesis; N(2)-acetyl-L-ornithine from L-glutamate: step 2/4. In terms of biological role, catalyzes the ATP-dependent phosphorylation of N-acetyl-L-glutamate. This is Acetylglutamate kinase from Mycobacterium ulcerans (strain Agy99).